A 511-amino-acid chain; its full sequence is ATP synthase subunit alpha (511 aa).

Residue 170–177 (GDRQTGKT) coordinates ATP.

It belongs to the ATPase alpha/beta chains family. As to quaternary structure, F-type ATPases have 2 components, CF(1) - the catalytic core - and CF(0) - the membrane proton channel. CF(1) has five subunits: alpha(3), beta(3), gamma(1), delta(1), epsilon(1). CF(0) has three main subunits: a(1), b(2) and c(9-12). The alpha and beta chains form an alternating ring which encloses part of the gamma chain. CF(1) is attached to CF(0) by a central stalk formed by the gamma and epsilon chains, while a peripheral stalk is formed by the delta and b chains.

Its subcellular location is the cell inner membrane. It catalyses the reaction ATP + H2O + 4 H(+)(in) = ADP + phosphate + 5 H(+)(out). Its function is as follows. Produces ATP from ADP in the presence of a proton gradient across the membrane. The alpha chain is a regulatory subunit. This is ATP synthase subunit alpha from Pelagibacter ubique (strain HTCC1062).